A 59-amino-acid chain; its full sequence is UPF0391 membrane protein Geob_0344 (59 aa).

2 consecutive transmembrane segments (helical) span residues 4–24 (WAAIFFIIAIVAAVFGFTGIA) and 33–53 (FLFILFLVVALIMLILGITAG).

This sequence belongs to the UPF0391 family.

The protein localises to the cell membrane. The polypeptide is UPF0391 membrane protein Geob_0344 (Geotalea daltonii (strain DSM 22248 / JCM 15807 / FRC-32) (Geobacter daltonii)).